We begin with the raw amino-acid sequence, 173 residues long: Ribosome maturation factor RimM (173 aa).

In terms of domain architecture, PRC barrel spans 95-169; that stretch reads DPDEFYDHQL…VIEIDPPEGL (75 aa).

This sequence belongs to the RimM family. As to quaternary structure, binds ribosomal protein uS19.

Its subcellular location is the cytoplasm. In terms of biological role, an accessory protein needed during the final step in the assembly of 30S ribosomal subunit, possibly for assembly of the head region. Essential for efficient processing of 16S rRNA. May be needed both before and after RbfA during the maturation of 16S rRNA. It has affinity for free ribosomal 30S subunits but not for 70S ribosomes. This chain is Ribosome maturation factor RimM, found in Mycobacteroides abscessus (strain ATCC 19977 / DSM 44196 / CCUG 20993 / CIP 104536 / JCM 13569 / NCTC 13031 / TMC 1543 / L948) (Mycobacterium abscessus).